The sequence spans 124 residues: MEYEFRRNSLTGTFLASFSMDHEVLGQWFSEELGPELAKIQQVLDIIKEIQSGKRDSWRLIGKDFSLDLDEEQARIYANALGFEQDYELEEAMSLYDAESEAYCGLEDLEEALLSWYKFVQKGL.

This sequence belongs to the UPF0231 family.

This chain is UPF0231 protein SO_3983, found in Shewanella oneidensis (strain ATCC 700550 / JCM 31522 / CIP 106686 / LMG 19005 / NCIMB 14063 / MR-1).